Consider the following 205-residue polypeptide: Large ribosomal subunit protein bL25A (205 aa).

The protein belongs to the bacterial ribosomal protein bL25 family. CTC subfamily. In terms of assembly, part of the 50S ribosomal subunit; part of the 5S rRNA/L5/L18/L25 subcomplex. Contacts the 5S rRNA. Binds to the 5S rRNA independently of L5 and L18.

Its function is as follows. This is one of the proteins that binds to the 5S RNA in the ribosome where it forms part of the central protuberance. The sequence is that of Large ribosomal subunit protein bL25A from Symbiobacterium thermophilum (strain DSM 24528 / JCM 14929 / IAM 14863 / T).